The primary structure comprises 103 residues: Small ribosomal subunit protein uS10 (103 aa).

This sequence belongs to the universal ribosomal protein uS10 family. Part of the 30S ribosomal subunit.

Functionally, involved in the binding of tRNA to the ribosomes. The polypeptide is Small ribosomal subunit protein uS10 (Acetivibrio thermocellus (strain ATCC 27405 / DSM 1237 / JCM 9322 / NBRC 103400 / NCIMB 10682 / NRRL B-4536 / VPI 7372) (Clostridium thermocellum)).